Here is a 497-residue protein sequence, read N- to C-terminus: Putative aldehyde dehydrogenase AldA (497 aa).

213 to 219 serves as a coordination point for NAD(+); sequence GKGSESG. Residues E257 and C291 contribute to the active site.

This sequence belongs to the aldehyde dehydrogenase family.

The catalysed reaction is an aldehyde + NAD(+) + H2O = a carboxylate + NADH + 2 H(+). This Staphylococcus epidermidis (strain ATCC 35984 / DSM 28319 / BCRC 17069 / CCUG 31568 / BM 3577 / RP62A) protein is Putative aldehyde dehydrogenase AldA (aldA).